Reading from the N-terminus, the 1096-residue chain is Cohesin subunit scc-3 (1096 aa).

Residues 1 to 21 (MSETPTDQSPQRMSTRNQARV) are compositionally biased toward polar residues. 2 disordered regions span residues 1–53 (MSET…KKRA) and 67–106 (NLNN…ESAE). Residues 261–312 (IELTQSKEKTSKQIEAEKAKLKNNSAGNEKYEALVAQRTQTEERAEEIRQII) are a coiled coil. Residues 320 to 405 (FVHRYRDVVP…NKFKDRLVSM (86 aa)) form the SCD domain. The interval 1057-1096 (DNMSVRSGMTVTSNATMRSTASSTRGRGRGRGRSRIADDF) is disordered. Positions 1060–1073 (SVRSGMTVTSNATM) are enriched in polar residues.

The protein belongs to the SCC3 family. Component of the cohesin complex, composed of the smc-1 and smc-3 heterodimer attached via their hinge domain, scc-1 which links them, and scc-3. Interacts with scc-1, smc-1 and tim-1. As to expression, expressed in gonadal cells.

The protein resides in the nucleus. Its subcellular location is the chromosome. Its function is as follows. Component of the cohesin complex, a complex required for the cohesion of sister chromatids after DNA replication. The cohesin complex apparently forms a large proteinaceous ring within which sister chromatids can be trapped. At anaphase, the scc-1 subunit of the complex is cleaved and dissociates from chromatin, allowing sister chromatids to segregate. The cohesin complex may also play a role in spindle pole assembly during mitosis. Plays an essential role in cell division during embryonic development. Required for the assembly of the synaptonemal complex between homologous chromosomes to promote sister chromatid cohesion during mitosis and meiosis. Has a role in stabilization of homologous chromosome associations during meiotic synapsis. Required for chromosome segregation during mitosis and meiosis. Plays a role in DNA double-strand break (DSB) repair during meiotic recombination and promotes the assembly of the 9-1-1 cell-cycle checkpoint response complex which is required for inducing apoptosis in response to DNA damage, at DNA damage sites. The chain is Cohesin subunit scc-3 from Caenorhabditis elegans.